Consider the following 352-residue polypeptide: tRNA pseudouridine synthase D (352 aa).

The active-site Nucleophile is Asp81. The region spanning 158–306 is the TRUD domain; it reads GVPNYFGQQR…RHERRTLLLK (149 aa).

It belongs to the pseudouridine synthase TruD family.

It catalyses the reaction uridine(13) in tRNA = pseudouridine(13) in tRNA. Functionally, responsible for synthesis of pseudouridine from uracil-13 in transfer RNAs. The sequence is that of tRNA pseudouridine synthase D from Photobacterium profundum (strain SS9).